Consider the following 142-residue polypeptide: Hemoglobin subunit alpha (142 aa).

The 141-residue stretch at 2-142 folds into the Globin domain; sequence VLSAADKGNV…VSTVLTSKYR (141 aa). Phosphoserine is present on Ser-4. N6-succinyllysine occurs at positions 8 and 12. Position 17 is an N6-acetyllysine; alternate (Lys-17). Lys-17 carries the post-translational modification N6-succinyllysine; alternate. Tyr-25 is modified (phosphotyrosine). Phosphoserine is present on Ser-36. The residue at position 41 (Lys-41) is an N6-succinyllysine. Ser-50 bears the Phosphoserine mark. His-59 lines the O2 pocket. His-88 contributes to the heme b binding site. Residue Ser-103 is modified to Phosphoserine. Thr-109 carries the post-translational modification Phosphothreonine. A Phosphoserine modification is found at Ser-125. Phosphothreonine is present on residues Thr-135 and Thr-138. At Ser-139 the chain carries Phosphoserine.

The protein belongs to the globin family. In terms of assembly, heterotetramer of two alpha chains and two beta chains. Red blood cells.

Its function is as follows. Involved in oxygen transport from the lung to the various peripheral tissues. Hemopressin acts as an antagonist peptide of the cannabinoid receptor CNR1. Hemopressin-binding efficiently blocks cannabinoid receptor CNR1 and subsequent signaling. This is Hemoglobin subunit alpha (HBA) from Bos gaurus frontalis (Domestic gayal).